Reading from the N-terminus, the 220-residue chain is Large ribosomal subunit protein uL3 (220 aa).

The tract at residues 61–81 is disordered; sequence KGSKSNKYANKPAEGHAKKAD.

The protein belongs to the universal ribosomal protein uL3 family. As to quaternary structure, part of the 50S ribosomal subunit. Forms a cluster with proteins L14 and L19.

Functionally, one of the primary rRNA binding proteins, it binds directly near the 3'-end of the 23S rRNA, where it nucleates assembly of the 50S subunit. This chain is Large ribosomal subunit protein uL3, found in Staphylococcus epidermidis (strain ATCC 12228 / FDA PCI 1200).